Here is a 350-residue protein sequence, read N- to C-terminus: Ornithine carbamoyltransferase, mitochondrial (350 aa).

A mitochondrion-targeting transit peptide spans 1–30 (MLHHMRTIINASWRYGNKCIVRQFGFSQTY). Residues 86–90 (STRTR), Arg137, and His164 each bind carbamoyl phosphate. Residue Arg137 participates in L-ornithine binding. Residues Asn195, 259–263 (DTWVS), 298–301 (HCLP), and Arg326 contribute to the L-ornithine site. Residue Cys299 is part of the active site. Arg326 provides a ligand contact to carbamoyl phosphate.

It belongs to the aspartate/ornithine carbamoyltransferase superfamily. OTCase family. Homotrimer. In terms of tissue distribution, liver.

It localises to the mitochondrion matrix. It carries out the reaction carbamoyl phosphate + L-ornithine = L-citrulline + phosphate + H(+). It participates in nitrogen metabolism; urea cycle; L-citrulline from L-ornithine and carbamoyl phosphate: step 1/1. OTC is necessary for the tadpoles transition from an ammonotelic, aquatic larva to a ureotelic, terrestrial adult. This Aquarana catesbeiana (American bullfrog) protein is Ornithine carbamoyltransferase, mitochondrial.